Consider the following 195-residue polypeptide: Probable GTP-binding protein EngB (195 aa).

In terms of domain architecture, EngB-type G spans 24–195 (ELPEIALAGR…EAWDAILEKL (172 aa)). Residues 32-39 (GRSNVGKS), 59-63 (GKTQL), 77-80 (DVPG), 144-147 (TKAD), and 176-178 (FSS) each bind GTP. Residues serine 39 and threonine 61 each contribute to the Mg(2+) site.

Belongs to the TRAFAC class TrmE-Era-EngA-EngB-Septin-like GTPase superfamily. EngB GTPase family. It depends on Mg(2+) as a cofactor.

In terms of biological role, necessary for normal cell division and for the maintenance of normal septation. The chain is Probable GTP-binding protein EngB from Streptococcus pneumoniae (strain P1031).